The chain runs to 990 residues: Aminopeptidase Q (990 aa).

The Cytoplasmic portion of the chain corresponds to 2-13 (GPPSSSGFYVSR). A helical; Signal-anchor for type II membrane protein membrane pass occupies residues 14 to 34 (AVALLLAGLVAALLLALAVLA). The Lumenal segment spans residues 35–990 (ALYGHCERVP…RIAAWLRRNT (956 aa)). Residues 48 to 91 (LPGLRDLEAESSPPLRQKPTPTPKPSSARELAVTTTPSNWRPPG) are disordered. Residues Asn-132 and Asn-168 are each glycosylated (N-linked (GlcNAc...) asparagine). Glu-240 serves as a coordination point for substrate. N-linked (GlcNAc...) asparagine glycosylation is found at Asn-261, Asn-288, Asn-319, and Asn-346. 379-383 (HAMEN) is a substrate binding site. His-415 contacts Zn(2+). The active-site Proton acceptor is Glu-416. Residues His-419 and Glu-438 each coordinate Zn(2+). Catalysis depends on Tyr-503, which acts as the Proton donor. Residues Asn-607 and Asn-653 are each glycosylated (N-linked (GlcNAc...) asparagine).

Belongs to the peptidase M1 family. Homodimer. Requires Zn(2+) as cofactor. N-glycosylated. As to expression, specifically expressed in placenta and not in other tissues. Mainly found at the cell surface region of the extravillous trophoblasts. Detected on extravillous trophoblasts in the outer layer of the chorion laeve in the fetal membrane Not detected on either fetal amnionic epithelial cells or maternal decidual cells. Also detected in the migrating extravillous trophoblasts in the maternal decidual tissues (at protein level).

It is found in the membrane. Inhibited by bestatin. Metalloprotease which may be important for placentation by regulating biological activity of key peptides at the embryo-maternal interface. On synthetic substrates it shows a marked preference for Leu-4-methylcoumaryl-7-amide (Leu-MCA) over Met-MCA, Arg-LCA and Lys-LCA. Cleaves the N-terminal amino acid of several peptides such as angiotensin-3, kisspeptin-10 and endokinin C. The protein is Aminopeptidase Q of Homo sapiens (Human).